Reading from the N-terminus, the 635-residue chain is Early transcription factor 70 kDa subunit (635 aa).

The Helicase ATP-binding domain maps to 32-185 (RSILDENNSV…SNIISIMSDE (154 aa)). Residue 45-52 (HIMGSGKT) participates in ATP binding. A DEXH box motif is present at residues 135–138 (DEAH).

This sequence belongs to the helicase family. VETF subfamily. As to quaternary structure, heterodimer of a 70 kDa and a 82 kDa subunit. Part of the early transcription complex composed of ETF, RAP94, and the DNA-directed RNA polymerase.

It is found in the virion. In terms of biological role, acts with RNA polymerase to initiate transcription from early gene promoters. Is recruited by the RPO-associated protein of 94 kDa (RAP94) to form the early transcription complex, which also contains the core RNA polymerase. ETF heterodimer binds to early gene promoters. The polypeptide is Early transcription factor 70 kDa subunit (VETFS) (Homo sapiens (Human)).